Here is a 378-residue protein sequence, read N- to C-terminus: MADARKAALDTALKKIEKNFGKGAIMRMGDAAQTTISTISSGSLALDDALGVGGYPRGRIVEIYGPESSGKTTVALHAVAEVQKQGGTAAYIDAENALDPVYAEHLGVNIDDLLLSQPDTGEQGLEIADALVSSGAVDILVVDSVAALVPRAEIEGEMGDAHVGLQARLMSQALRKLSGTLNKTKTIALFINQIREKVGVMFGNPETTPGGRALKFYATIRLEVRRAEQIKEGTNIIGNRVRIKVVKNKVAPPFKRAEVDIMYGQGISQTGEIVDMAAEKDIVKKSGSWYSYGDDRIGQGRENAKKYLDEHPDVMAEIRQKVRDAYGMDQTGEEDDQADDKSKDKATKPSDKSQAQAKPKKPVATETSLDLDDSKTDK.

Residue 65–72 (GPESSGKT) participates in ATP binding. The segment at 325-378 (AYGMDQTGEEDDQADDKSKDKATKPSDKSQAQAKPKKPVATETSLDLDDSKTDK) is disordered. The segment covering 339 to 351 (DDKSKDKATKPSD) has biased composition (basic and acidic residues).

The protein belongs to the RecA family.

The protein localises to the cytoplasm. Can catalyze the hydrolysis of ATP in the presence of single-stranded DNA, the ATP-dependent uptake of single-stranded DNA by duplex DNA, and the ATP-dependent hybridization of homologous single-stranded DNAs. It interacts with LexA causing its activation and leading to its autocatalytic cleavage. The polypeptide is Protein RecA (Lactiplantibacillus pentosus (Lactobacillus pentosus)).